The sequence spans 589 residues: L-fucose isomerase (589 aa).

Catalysis depends on proton acceptor residues Glu-340 and Asp-364. Residues Glu-340, Asp-364, and His-527 each coordinate Mn(2+).

It belongs to the L-fucose isomerase family. Mn(2+) is required as a cofactor.

The protein localises to the cytoplasm. The catalysed reaction is L-fucose = L-fuculose. It functions in the pathway carbohydrate degradation; L-fucose degradation; L-lactaldehyde and glycerone phosphate from L-fucose: step 1/3. Its function is as follows. Converts the aldose L-fucose into the corresponding ketose L-fuculose. The polypeptide is L-fucose isomerase (Haemophilus influenzae (strain ATCC 51907 / DSM 11121 / KW20 / Rd)).